The primary structure comprises 268 residues: Movement protein (268 aa).

Residues serine 218–methionine 246 are disordered. Positions isoleucine 225–tyrosine 237 are enriched in polar residues.

Belongs to the tobamovirus movement protein family. As to quaternary structure, binds to host RBCS at the plasmodesmata; this interaction seems required for viral systemic movement. In resistant plants, interacts with host MBP2C at host microtubules; this interaction prevents virus cell to cell movement. In resistant plants, interacts with host resistance (R) protein (e.g. tomato ToMV resistance protein TM-2(2), AC Q71BG9) at the host plasma membrane; this interaction triggers host defense responses leading to programmed cell death.

Its subcellular location is the host cytoplasm. The protein resides in the host cytoskeleton. The protein localises to the host cell junction. It is found in the host plasmodesma. Its function is as follows. Transports viral genome to neighboring plant cells directly through plasmosdesmata, without any budding. The movement protein allows efficient cell to cell propagation, by bypassing the host cell wall barrier. Forms a ribonucleoprotein complex with viral RNA. Binds microtubules and modulates microtubule stability. Can bind double-stranded DNA. Triggers host hypersensitive defense reaction in incompatible plants harboring resistance (R) proteins. This is Movement protein (MP) from Nicotiana tabacum (Common tobacco).